The sequence spans 204 residues: Leucyl/phenylalanyl-tRNA--protein transferase (204 aa).

Belongs to the L/F-transferase family.

The protein resides in the cytoplasm. The catalysed reaction is N-terminal L-lysyl-[protein] + L-leucyl-tRNA(Leu) = N-terminal L-leucyl-L-lysyl-[protein] + tRNA(Leu) + H(+). The enzyme catalyses N-terminal L-arginyl-[protein] + L-leucyl-tRNA(Leu) = N-terminal L-leucyl-L-arginyl-[protein] + tRNA(Leu) + H(+). It carries out the reaction L-phenylalanyl-tRNA(Phe) + an N-terminal L-alpha-aminoacyl-[protein] = an N-terminal L-phenylalanyl-L-alpha-aminoacyl-[protein] + tRNA(Phe). Functionally, functions in the N-end rule pathway of protein degradation where it conjugates Leu, Phe and, less efficiently, Met from aminoacyl-tRNAs to the N-termini of proteins containing an N-terminal arginine or lysine. The sequence is that of Leucyl/phenylalanyl-tRNA--protein transferase from Brucella abortus (strain 2308).